Here is a 167-residue protein sequence, read N- to C-terminus: Leptin (167 aa).

Positions 1-21 are cleaved as a signal peptide; sequence MRCGSLCRFLWLWSCLSYIEA. C117 and C167 are oxidised to a cystine.

This sequence belongs to the leptin family.

It is found in the secreted. Functionally, key player in the regulation of energy balance and body weight control. Once released into the circulation, has central and peripheral effects by binding LEPR, found in many tissues, which results in the activation of several major signaling pathways. In the hypothalamus, acts as an appetite-regulating factor that induces a decrease in food intake and an increase in energy consumption by inducing anorexinogenic factors and suppressing orexigenic neuropeptides, also regulates bone mass and secretion of hypothalamo-pituitary-adrenal hormones. In the periphery, increases basal metabolism, influences reproductive function, regulates pancreatic beta-cell function and insulin secretion, is pro-angiogenic for endothelial cell and affects innate and adaptive immunity. In the arcuate nucleus of the hypothalamus, activates by depolarization POMC neurons inducing FOS and SOCS3 expression to release anorexigenic peptides and inhibits by hyperpolarization NPY neurons inducing SOCS3 with a consequent reduction on release of orexigenic peptides. In addition to its known satiety inducing effect, has a modulatory role in nutrient absorption. In the intestine, reduces glucose absorption by enterocytes by activating PKC and leading to a sequential activation of p38, PI3K and ERK signaling pathways which exerts an inhibitory effect on glucose absorption. Acts as a growth factor on certain tissues, through the activation of different signaling pathways increases expression of genes involved in cell cycle regulation such as CCND1, via JAK2-STAT3 pathway, or VEGFA, via MAPK1/3 and PI3K-AKT1 pathways. May also play an apoptotic role via JAK2-STAT3 pathway and up-regulation of BIRC5 expression. Pro-angiogenic, has mitogenic activity on vascular endothelial cells and plays a role in matrix remodeling by regulating the expression of matrix metalloproteinases (MMPs) and tissue inhibitors of metalloproteinases (TIMPs). In innate immunity, modulates the activity and function of neutrophils by increasing chemotaxis and the secretion of oxygen radicals. Increases phagocytosis by macrophages and enhances secretion of pro-inflammatory mediators. Increases cytotoxic ability of NK cells. Plays a pro-inflammatory role, in synergy with IL1B, by inducing NOS2 which promotes the production of IL6, IL8 and Prostaglandin E2, through a signaling pathway that involves JAK2, PI3K, MAP2K1/MEK1 and MAPK14/p38. In adaptive immunity, promotes the switch of memory T-cells towards T helper-1 cell immune responses. Increases CD4(+)CD25(-) T-cell proliferation and reduces autophagy during TCR (T-cell receptor) stimulation, through MTOR signaling pathway activation and BCL2 up-regulation. In Phoca vitulina (Harbor seal), this protein is Leptin (LEP).